The primary structure comprises 213 residues: N-(5'-phosphoribosyl)anthranilate isomerase (213 aa).

The protein belongs to the TrpF family.

The enzyme catalyses N-(5-phospho-beta-D-ribosyl)anthranilate = 1-(2-carboxyphenylamino)-1-deoxy-D-ribulose 5-phosphate. Its pathway is amino-acid biosynthesis; L-tryptophan biosynthesis; L-tryptophan from chorismate: step 3/5. This Rhodopseudomonas palustris (strain ATCC BAA-98 / CGA009) protein is N-(5'-phosphoribosyl)anthranilate isomerase.